Here is a 627-residue protein sequence, read N- to C-terminus: Carene synthase 2, chloroplastic (627 aa).

Residues 1–36 constitute a chloroplast transit peptide; sequence MSVISIVPLASKSCLYKSLMSSTHELKALCRPIVTL. Mg(2+) contacts are provided by Asp-378, Asp-382, and Asp-530. The DDXXD motif signature appears at 378-382; it reads DDMYD.

This sequence belongs to the terpene synthase family. Tpsd subfamily. Mg(2+) serves as cofactor. The cofactor is Mn(2+).

It is found in the plastid. The protein resides in the chloroplast. The catalysed reaction is (2E)-geranyl diphosphate = (+)-car-3-ene + diphosphate. Its pathway is terpene metabolism; oleoresin biosynthesis. Its function is as follows. Terpene synthase (TPS) involved in defensive oleoresin formation in conifers in response to insect attack (e.g. white pine weevil P.strobi) or other injury. This chain is Carene synthase 2, chloroplastic (TPS-3car2), found in Picea sitchensis (Sitka spruce).